A 272-amino-acid chain; its full sequence is Glutamate 5-kinase (272 aa).

K15 contacts ATP. Positions 55, 142, and 158 each coordinate substrate. Residues 178 to 179 (SD) and 220 to 226 (TGGMLSK) contribute to the ATP site.

This sequence belongs to the glutamate 5-kinase family.

It localises to the cytoplasm. It carries out the reaction L-glutamate + ATP = L-glutamyl 5-phosphate + ADP. It participates in amino-acid biosynthesis; L-proline biosynthesis; L-glutamate 5-semialdehyde from L-glutamate: step 1/2. Catalyzes the transfer of a phosphate group to glutamate to form L-glutamate 5-phosphate. The polypeptide is Glutamate 5-kinase (Streptococcus equi subsp. zooepidemicus (strain H70)).